Here is a 394-residue protein sequence, read N- to C-terminus: Elongation factor Tu 1 (394 aa).

The region spanning 10 to 204 (KPHVNVGTIG…ALDSYIPEPE (195 aa)) is the tr-type G domain. The segment at 19–26 (GHVDHGKT) is G1. GTP is bound at residue 19 to 26 (GHVDHGKT). Thr-26 is a Mg(2+) binding site. Residues 60–64 (GITIN) are G2. The interval 81–84 (DCPG) is G3. GTP is bound by residues 81–85 (DCPGH) and 136–139 (NKCD). A G4 region spans residues 136–139 (NKCD). The interval 174–176 (SAL) is G5.

It belongs to the TRAFAC class translation factor GTPase superfamily. Classic translation factor GTPase family. EF-Tu/EF-1A subfamily. As to quaternary structure, monomer.

The protein localises to the cytoplasm. The enzyme catalyses GTP + H2O = GDP + phosphate + H(+). Its function is as follows. GTP hydrolase that promotes the GTP-dependent binding of aminoacyl-tRNA to the A-site of ribosomes during protein biosynthesis. This Shewanella oneidensis (strain ATCC 700550 / JCM 31522 / CIP 106686 / LMG 19005 / NCIMB 14063 / MR-1) protein is Elongation factor Tu 1.